The sequence spans 576 residues: Mycobactin import ATP-binding/permease protein IrtB (576 aa).

The Cytoplasmic portion of the chain corresponds to 1–25 (MIRTLIALVPADKRGTLGLYTVLTV). An ABC transmembrane type-1 domain is found at 19-299 (LYTVLTVLSV…LSELTPAIES (281 aa)). Residues 26-46 (LSVVIRAAGTVLLVPLVAALF) form a helical membrane-spanning segment. The Periplasmic portion of the chain corresponds to 47 to 52 (GDTPQD). Residues 53–73 (AWPWLGWLTAATAAGWIVDTT) traverse the membrane as a helical segment. Topologically, residues 74–131 (TSRLGFDLGFAVLDHTQHDVADRMPNIRLDWLTAENTATARAAIASTGPELVGLVVNL) are cytoplasmic. Helical transmembrane passes span 132–152 (LTPL…LVAV) and 153–173 (SPPL…AMWA). The Cytoplasmic segment spans residues 174–241 (SNRLSRKADT…RLLAMQIPGQ (68 aa)). Residues 242-262 (LLFSLASQLALILLAGMATWL) traverse the membrane as a helical segment. Residues 263-267 (TVRGE) lie on the Periplasmic side of the membrane. The helical transmembrane segment at 268–288 (LSVPEAVAMIVVVARYLEPFT) threads the bilayer. Residues 289 to 576 (SLSELTPAIE…HEAADWQITH (288 aa)) lie on the Cytoplasmic side of the membrane. One can recognise an ABC transporter domain in the interval 332–565 (IEFDCVTFGY…GGRFDEFWRR (234 aa)). 364–371 (GPSGSGKS) is a binding site for ATP.

This sequence belongs to the ABC transporter superfamily. Siderophore-Fe(3+) uptake transporter (SIUT) (TC 3.A.1.21) family. In terms of assembly, forms a heterodimer with IrtA.

Its subcellular location is the cell inner membrane. Its function is as follows. Part of the ABC transporter complex IrtAB involved in the import of iron-bound mycobactin (Fe-MBT) and carboxymycobactin (Fe-cMBT). Has a preference for Fe-MBT over Fe-cMBT. Transmembrane domains (TMD) form a pore in the membrane and the ATP-binding domain (NBD) is responsible for energy generation. The chain is Mycobactin import ATP-binding/permease protein IrtB from Mycolicibacterium smegmatis (strain ATCC 700084 / mc(2)155) (Mycobacterium smegmatis).